The following is a 243-amino-acid chain: Carboxy-S-adenosyl-L-methionine synthase (243 aa).

S-adenosyl-L-methionine contacts are provided by residues Y40, 65 to 67 (GCS), 90 to 91 (DN), 118 to 119 (DI), N133, and R200.

It belongs to the class I-like SAM-binding methyltransferase superfamily. Cx-SAM synthase family. In terms of assembly, homodimer.

The enzyme catalyses prephenate + S-adenosyl-L-methionine = carboxy-S-adenosyl-L-methionine + 3-phenylpyruvate + H2O. Its function is as follows. Catalyzes the conversion of S-adenosyl-L-methionine (SAM) to carboxy-S-adenosyl-L-methionine (Cx-SAM). This is Carboxy-S-adenosyl-L-methionine synthase from Shewanella loihica (strain ATCC BAA-1088 / PV-4).